A 162-amino-acid polypeptide reads, in one-letter code: Gas vesicle protein I (162 aa).

The interval 1 to 162 is disordered; that stretch reads MTGKQHQKHE…AERQRGGADE (162 aa). Basic and acidic residues-rich tracts occupy residues 22–37 and 47–64; these read INRDKARSKLLRQREK and RQSEVRRGNQSKAQHDTQ. Composition is skewed to polar residues over residues 65–74 and 81–110; these read SETQRGTQSK and TGGTKNPTAHSTLPPQKTNAENAVRNSHST. Composition is skewed to basic and acidic residues over residues 122 to 142 and 151 to 162; these read ARERLYGLRLHRETTASEDKS and PKAERQRGGADE.

This sequence belongs to the gas vesicle GvpI family. As to quaternary structure, gvpF to GvpM interact with each other in vitro, and may form multi-subunit complex(es). Interacts with GvpC and GvpO.

Its subcellular location is the gas vesicle. Its function is as follows. Proteins GvpF to GvpM might be involved in nucleating gas vesicle formation. A minor component of the gas vesicle. Gas vesicles are hollow, gas filled proteinaceous nanostructures found in some microorganisms. They allow positioning of halobacteria at the optimal depth for growth in the poorly aerated, shallow brine pools of their habitat. Functionally, expression of a 9.5 kb mc-vac DNA fragment containing 2 divergently transcribed regions (gvpD-gvpE-gvpF-gvpG-gvpH-gvpI-gvpJ-gvpK-gvpL-gvpM and gvpA-gvpC-gvpN-gvpO) allows H.volcanii to produce gas vesicles. This Haloferax mediterranei (strain ATCC 33500 / DSM 1411 / JCM 8866 / NBRC 14739 / NCIMB 2177 / R-4) (Halobacterium mediterranei) protein is Gas vesicle protein I.